We begin with the raw amino-acid sequence, 210 residues long: Superoxide dismutase [Mn], mitochondrial (210 aa).

Mn(2+) contacts are provided by H29, H77, D164, and H168.

The protein belongs to the iron/manganese superoxide dismutase family. In terms of assembly, homotetramer. Mn(2+) serves as cofactor.

It is found in the mitochondrion matrix. The enzyme catalyses 2 superoxide + 2 H(+) = H2O2 + O2. Functionally, destroys superoxide anion radicals which are normally produced within the cells and which are toxic to biological systems. The polypeptide is Superoxide dismutase [Mn], mitochondrial (sodB) (Aspergillus oryzae (strain ATCC 42149 / RIB 40) (Yellow koji mold)).